A 38-amino-acid polypeptide reads, in one-letter code: Glutathione S-transferase 2 (38 aa).

It belongs to the GST superfamily. Phi family.

It carries out the reaction RX + glutathione = an S-substituted glutathione + a halide anion + H(+). Conjugation of reduced glutathione to a wide number of exogenous and endogenous hydrophobic electrophiles. In plants, may have a detoxification role against certain herbicides. The protein is Glutathione S-transferase 2 of Populus euphratica (Euphrates poplar).